We begin with the raw amino-acid sequence, 433 residues long: Glutamate-1-semialdehyde 2,1-aminomutase (433 aa).

Lys272 is modified (N6-(pyridoxal phosphate)lysine).

Belongs to the class-III pyridoxal-phosphate-dependent aminotransferase family. HemL subfamily. As to quaternary structure, homodimer. Pyridoxal 5'-phosphate is required as a cofactor.

It is found in the cytoplasm. The enzyme catalyses (S)-4-amino-5-oxopentanoate = 5-aminolevulinate. The protein operates within porphyrin-containing compound metabolism; protoporphyrin-IX biosynthesis; 5-aminolevulinate from L-glutamyl-tRNA(Glu): step 2/2. The polypeptide is Glutamate-1-semialdehyde 2,1-aminomutase (Methylacidiphilum infernorum (isolate V4) (Methylokorus infernorum (strain V4))).